The following is a 286-amino-acid chain: Prepilin leader peptidase/N-methyltransferase (286 aa).

A helical membrane pass occupies residues 11–31 (LGIFFVGLFSLMVGSFLNVVI). 4 residues coordinate Zn(2+): Cys-74, Cys-77, Cys-99, and Cys-102. 6 consecutive transmembrane segments (helical) span residues 106–126 (ISAR…IVAF), 132–152 (LSLG…FIDA), 161–181 (LTLP…FINL), 185–205 (VIGA…FKLI), 231–251 (LPII…GIGL), and 257–277 (MPFG…GAQI).

This sequence belongs to the peptidase A24 family. Zn(2+) serves as cofactor.

It is found in the cell inner membrane. It catalyses the reaction Typically cleaves a -Gly-|-Phe- bond to release an N-terminal, basic peptide of 5-8 residues from type IV prepilin, and then N-methylates the new N-terminal amino group, the methyl donor being S-adenosyl-L-methionine.. Functionally, plays an essential role in type IV pili and type II pseudopili formation by proteolytically removing the leader sequence from substrate proteins and subsequently monomethylating the alpha-amino group of the newly exposed N-terminal phenylalanine. The polypeptide is Prepilin leader peptidase/N-methyltransferase (fimP) (Dichelobacter nodosus (Bacteroides nodosus)).